The chain runs to 417 residues: Serine hydroxymethyltransferase 3 (417 aa).

Residues Leu121 and Gly125–Leu127 contribute to the (6S)-5,6,7,8-tetrahydrofolate site. Lys230 is modified (N6-(pyridoxal phosphate)lysine). Residue Ser355 to Phe357 coordinates (6S)-5,6,7,8-tetrahydrofolate.

The protein belongs to the SHMT family. In terms of assembly, homodimer. Pyridoxal 5'-phosphate is required as a cofactor.

It is found in the cytoplasm. It catalyses the reaction (6R)-5,10-methylene-5,6,7,8-tetrahydrofolate + glycine + H2O = (6S)-5,6,7,8-tetrahydrofolate + L-serine. The protein operates within one-carbon metabolism; tetrahydrofolate interconversion. Its pathway is amino-acid biosynthesis; glycine biosynthesis; glycine from L-serine: step 1/1. Catalyzes the reversible interconversion of serine and glycine with tetrahydrofolate (THF) serving as the one-carbon carrier. This reaction serves as the major source of one-carbon groups required for the biosynthesis of purines, thymidylate, methionine, and other important biomolecules. Also exhibits THF-independent aldolase activity toward beta-hydroxyamino acids, producing glycine and aldehydes, via a retro-aldol mechanism. This is Serine hydroxymethyltransferase 3 from Pseudomonas fluorescens (strain Pf0-1).